A 309-amino-acid polypeptide reads, in one-letter code: Glutaminase (309 aa).

Residues Ser-65, Asn-117, Glu-162, Asn-169, Tyr-193, Tyr-245, and Val-263 each coordinate substrate.

The protein belongs to the glutaminase family. Homotetramer.

It carries out the reaction L-glutamine + H2O = L-glutamate + NH4(+). In Geobacillus thermodenitrificans (strain NG80-2), this protein is Glutaminase.